A 206-amino-acid polypeptide reads, in one-letter code: Small ribosomal subunit protein uS4 (206 aa).

Residues 96–156 enclose the S4 RNA-binding domain; that stretch reads QRLDNVVYRM…EKSKTQARII (61 aa).

Belongs to the universal ribosomal protein uS4 family. As to quaternary structure, part of the 30S ribosomal subunit. Contacts protein S5. The interaction surface between S4 and S5 is involved in control of translational fidelity.

Functionally, one of the primary rRNA binding proteins, it binds directly to 16S rRNA where it nucleates assembly of the body of the 30S subunit. In terms of biological role, with S5 and S12 plays an important role in translational accuracy. The sequence is that of Small ribosomal subunit protein uS4 from Pseudoalteromonas translucida (strain TAC 125).